Reading from the N-terminus, the 218-residue chain is Cytidylate kinase (218 aa).

7–15 (GPSASGKSS) contributes to the ATP binding site.

This sequence belongs to the cytidylate kinase family. Type 1 subfamily.

The protein localises to the cytoplasm. It carries out the reaction CMP + ATP = CDP + ADP. The catalysed reaction is dCMP + ATP = dCDP + ADP. This chain is Cytidylate kinase, found in Borrelia hermsii (strain HS1 / DAH).